A 92-amino-acid chain; its full sequence is Large ribosomal subunit protein eL43z (92 aa).

Residues 39–60 (CEFCGKFAVKRKAVGIWGCKDC) form a C4-type zinc finger.

It belongs to the eukaryotic ribosomal protein eL43 family.

The chain is Large ribosomal subunit protein eL43z from Oryza sativa subsp. japonica (Rice).